The primary structure comprises 366 residues: D-alanine--D-alanine ligase (366 aa).

The ATP-grasp domain occupies 148 to 357; that stretch reads KMTFEQAGLA…FPELVDRLIQ (210 aa). Residue 184–239 coordinates ATP; that stretch reads EAALGYPAFVKPANLGSSVGIAKVRSRQELEAALDNAASYDRRLVVEAGVVAREVE. 3 residues coordinate Mg(2+): Asp310, Glu324, and Asn326.

This sequence belongs to the D-alanine--D-alanine ligase family. Requires Mg(2+) as cofactor. Mn(2+) serves as cofactor.

The protein localises to the cytoplasm. It carries out the reaction 2 D-alanine + ATP = D-alanyl-D-alanine + ADP + phosphate + H(+). Its pathway is cell wall biogenesis; peptidoglycan biosynthesis. Cell wall formation. The protein is D-alanine--D-alanine ligase of Nostoc punctiforme (strain ATCC 29133 / PCC 73102).